Consider the following 606-residue polypeptide: Vitamin B12 transporter BtuB (606 aa).

The signal sequence occupies residues 1–21 (MKKTLLAVALAPLCLPSQVFA). Positions 28-35 (DVMVVTAN) match the TonB box motif. Positions 40-152 (PIKNVIAPIS…IGGVLNIITA (113 aa)) constitute a TBDR plug domain. One can recognise a TBDR beta-barrel domain in the interval 157–606 (ESVAEVTAGG…SYYATATYKF (450 aa)). Positions 589–606 (ETYNVQERSYYATATYKF) match the TonB C-terminal box motif.

Belongs to the TonB-dependent receptor family. BtuB (TC 1.B.14.3.1) subfamily.

Its subcellular location is the cell outer membrane. Involved in the active translocation of vitamin B12 (cyanocobalamin) across the outer membrane to the periplasmic space. It derives its energy for transport by interacting with the trans-periplasmic membrane protein TonB. In Photobacterium profundum (strain SS9), this protein is Vitamin B12 transporter BtuB.